The following is a 262-amino-acid chain: Taurine import ATP-binding protein TauB (262 aa).

The region spanning 4–234 (VDHASVFFAA…RFAETGDARS (231 aa)) is the ABC transporter domain. Residue 39-46 (GASGCGKS) coordinates ATP.

The protein belongs to the ABC transporter superfamily. Taurine importer (TC 3.A.1.17.1) family. In terms of assembly, the complex is composed of two ATP-binding proteins (TauB), two transmembrane proteins (TauC) and a solute-binding protein (TauA).

The protein resides in the cell inner membrane. The catalysed reaction is taurine(out) + ATP + H2O = taurine(in) + ADP + phosphate + H(+). In terms of biological role, part of the ABC transporter complex TauABC involved in taurine import. Responsible for energy coupling to the transport system. The polypeptide is Taurine import ATP-binding protein TauB (Rhizobium johnstonii (strain DSM 114642 / LMG 32736 / 3841) (Rhizobium leguminosarum bv. viciae)).